The chain runs to 374 residues: WAT1-related protein At2g39510 (374 aa).

10 consecutive transmembrane segments (helical) span residues 9 to 29 (FITV…AKFA), 38 to 58 (VLAS…AYFL), 64 to 84 (PKMT…EPTI), 99 to 119 (TFTA…AWIF), 135 to 155 (ILGT…KGPL), 182 to 202 (GASL…LQAI), 212 to 232 (SLTA…ALFI), 249 to 269 (LAAV…QGVI), 284 to 304 (LSMV…MFLG), and 306 to 326 (ILGA…KSKD). EamA domains are found at residues 19–147 (YAGL…GAML) and 191–320 (ICWA…YSVL). The interval 350–374 (SKANAKMDTNDASVVISRPNTNESV) is disordered.

It belongs to the drug/metabolite transporter (DMT) superfamily. Plant drug/metabolite exporter (P-DME) (TC 2.A.7.4) family.

The protein localises to the membrane. The sequence is that of WAT1-related protein At2g39510 from Arabidopsis thaliana (Mouse-ear cress).